Reading from the N-terminus, the 109-residue chain is Small ribosomal subunit protein bS20 (109 aa).

Belongs to the bacterial ribosomal protein bS20 family.

Functionally, binds directly to 16S ribosomal RNA. In Synechococcus sp. (strain JA-2-3B'a(2-13)) (Cyanobacteria bacterium Yellowstone B-Prime), this protein is Small ribosomal subunit protein bS20.